The chain runs to 770 residues: Amyloid-beta precursor protein (770 aa).

Residues 1 to 17 form the signal peptide; it reads MLPGLALVLLAAWTARA. The Extracellular portion of the chain corresponds to 18–701; it reads LEVPTDGNAG…AEDVGSNKGA (684 aa). Residues 28–123 form a GFLD subdomain region; sequence LLAEPQVAMF…PYRCLVGEFV (96 aa). The E1 domain maps to 28–189; that stretch reads LLAEPQVAMF…RGVEFVCCPL (162 aa). Disulfide bonds link cysteine 38–cysteine 62, cysteine 73–cysteine 117, cysteine 98–cysteine 105, cysteine 133–cysteine 187, cysteine 144–cysteine 174, and cysteine 158–cysteine 186. 96 to 110 lines the heparin pocket; it reads NWCKRSRKQCKTHTH. Positions 131–189 are cuBD subdomain; it reads DKCKFLHQERMDVCETHLHWHTVAKETCSEKSTNLHDYGMLLPCGIDKFRGVEFVCCPL. The interval 135-155 is copper-binding; that stretch reads FLHQERMDVCETHLHWHTVAK. Cu(2+)-binding residues include histidine 147, histidine 151, and tyrosine 168. The segment at 181-188 is zinc-binding; that stretch reads GVEFVCCP. 3 residues coordinate Zn(2+): glutamate 183, cysteine 186, and cysteine 187. Acidic residues predominate over residues 196–207; that stretch reads IDSADAEEDDSD. The segment at 196–284 is disordered; the sequence is IDSADAEEDD…TTTTTTESVE (89 aa). Residue serine 198 is modified to Phosphoserine; by CK2. Serine 206 is subject to Phosphoserine; by CK1. Residues tyrosine 217 and tyrosine 262 each carry the sulfotyrosine modification. Over residues 228-264 the composition is skewed to acidic residues; that stretch reads VAEEEEVADVEEEEAEDDEDDEDGDEVEEEAEEPYEE. Residues 268–281 show a composition bias toward low complexity; sequence RTTSIATTTTTTTE. 3 disulfides stabilise this stretch: cysteine 291–cysteine 341, cysteine 300–cysteine 324, and cysteine 316–cysteine 337. In terms of domain architecture, BPTI/Kunitz inhibitor spans 291–341; it reads CSEQAETGPCRAMISRWYFDVTEGKCAPFFYGGCGGNRNNFDTEEYCMAVC. Sulfotyrosine is present on tyrosine 336. Positions 344-365 match the OX-2 motif; it reads VMSQSLLKTTQEHLPQDPVKLP. An E2 domain is found at 374–565; the sequence is AVDKYLETPG…EEIQDEVDEL (192 aa). Residues 391-423 form a heparin-binding region; the sequence is FQKAKERLEAKHRERMSQVMREWEEAERQAKNL. Serine 441 is modified (phosphoserine). Positions 491–522 are heparin-binding; that stretch reads FNMLKKYVRAEQKDRQHTLKHFEHVRMVDPKK. A Phosphotyrosine modification is found at tyrosine 497. The collagen-binding stretch occupies residues 523-540; sequence AAQIRSQVMTHLRVIYER. N-linked (GlcNAc...) asparagine glycans are attached at residues asparagine 542 and asparagine 571. The Cu(2+) site is built by histidine 677, tyrosine 681, histidine 684, and histidine 685. The Zn(2+) site is built by histidine 677, tyrosine 681, histidine 684, and histidine 685. An interaction with PSEN1 region spans residues 695 to 722; the sequence is VGSNKGAIIGLMVGGVVIATVIVITLVM. The helical transmembrane segment at 702–722 threads the bilayer; the sequence is IIGLMVGGVVIATVIVITLVM. Residues 723–770 are Cytoplasmic-facing; that stretch reads LKKKQYTSIHHGVVEVDAAVTPEERHLSKMQQNGYENPTYKFFEQMQN. Residues 724 to 734 carry the Basolateral sorting signal motif; that stretch reads KKKQYTSIHHG. Residue threonine 729 is modified to Phosphothreonine. A Phosphoserine; by APP-kinase I modification is found at serine 730. The segment at 732–751 is interaction with G(o)-alpha; it reads HHGVVEVDAAVTPEERHLSK. Threonine 743 bears the Phosphothreonine; by CDK5 and MAPK10 mark. The tract at residues 756-770 is required for the interaction with KIF5B and for anterograde transport in axons; sequence GYENPTYKFFEQMQN. Position 757 is a phosphotyrosine; by ABL1 (tyrosine 757). Positions 757–762 match the YENPXY motif; contains endocytosis signal motif; the sequence is YENPTY. Residue lysine 763 forms a Glycyl lysine isopeptide (Lys-Gly) (interchain with G-Cter in ubiquitin) linkage.

This sequence belongs to the APP family. As to quaternary structure, binds, via its C-terminus, to the PID domain of several cytoplasmic proteins, including APBB family members, the APBA family, MAPK8IP1, SHC1 and NUMB and DAB1. Binding to DAB1 inhibits its serine phosphorylation. Interacts (via NPXY motif) with DAB2 (via PID domain); the interaction is impaired by tyrosine phosphorylation of the NPXY motif. Also interacts with GPCR-like protein BPP, APPBP1, IB1, KNS2 (via its TPR domains), APPBP2 (via BaSS) and DDB1. In vitro, it binds MAPT via the MT-binding domains. Associates with microtubules in the presence of ATP and in a kinesin-dependent manner. Interacts, through a C-terminal domain, with GNAO1. Amyloid-beta protein 42 binds CHRNA7 in hippocampal neurons. Amyloid-beta associates with HADH2. Interacts with CPEB1, ANKS1B and AGER. Interacts with ITM2B. Interacts with ITM2C. Interacts with IDE. Can form homodimers; dimerization is enhanced in the presence of Cu(2+) ions. Can form homodimers; this is promoted by heparin binding. Amyloid-beta protein 40 interacts with S100A9. CTF-alpha product of APP interacts with GSAP. Interacts with SORL1 (via N-terminal ectodomain); this interaction retains APP in the trans-Golgi network and reduces processing into soluble APP-alpha and amyloid-beta peptides. The C99 fragment also interacts with SORL1. Interacts with PLD3. Interacts with VDAC1. Interacts with NSG1; could regulate APP processing. Amyloid-beta protein 42 interacts with FPR2. Interacts (via transmembrane region) with PSEN1; the interaction is direct. Interacts with LRRK2. Interacts (via cytoplasmic domain) with KIF5B. Interacts (via C-terminus) with APBB2/FE65L1 (via C-terminus). Interacts (via intracellular domain) with APBB3. Post-translationally, proteolytically processed under normal cellular conditions. Cleavage either by alpha-secretase, beta-secretase or theta-secretase leads to generation and extracellular release of soluble APP peptides, S-APP-alpha and S-APP-beta, and the retention of corresponding membrane-anchored C-terminal fragments, C80, C83 and C99. Subsequent processing of C80 and C83 by gamma-secretase yields P3 peptides. This is the major secretory pathway and is non-amyloidogenic. Alternatively, presenilin/nicastrin-mediated gamma-secretase processing of C99 releases the amyloid-beta proteins, amyloid-beta protein 40 and amyloid-beta protein 42, major components of amyloid plaques, and the cytotoxic C-terminal fragments, gamma-CTF(50), gamma-CTF(57) and gamma-CTF(59). PSEN1 cleavage is more efficient with C83 than with C99 as substrate (in vitro). Amyloid-beta protein 40 and Amyloid-beta protein 42 are cleaved by ACE. Many other minor amyloid-beta peptides, amyloid-beta 1-X peptides, are found in cerebral spinal fluid (CSF) including the amyloid-beta X-15 peptides, produced from the cleavage by alpha-secretase. In terms of processing, proteolytically cleaved by caspases during neuronal apoptosis. Cleavage at Asp-739 by either caspase-3, -8 or -9 results in the production of the neurotoxic C31 peptide and the increased production of amyloid-beta peptides. N- and O-glycosylated. Post-translationally, phosphorylation in the C-terminal on tyrosine, threonine and serine residues is neuron-specific. Phosphorylation can affect APP processing, neuronal differentiation and interaction with other proteins. Phosphorylated on Thr-743 in neuronal cells by Cdc5 kinase and Mapk10, in dividing cells by Cdc2 kinase in a cell-cycle dependent manner with maximal levels at the G2/M phase and, in vitro, by GSK-3-beta. The Thr-743 phosphorylated form causes a conformational change which reduces binding of Fe65 family members. In dopaminergic (DA) neurons, phosphorylation on Thr-743 by LRKK2 promotes the production and the nuclear translocation of the APP intracellular domain (AICD) which induces DA neuron apoptosis. Phosphorylation on Tyr-757 is required for SHC binding. Phosphorylated in the extracellular domain by casein kinases on both soluble and membrane-bound APP. This phosphorylation is inhibited by heparin. In terms of processing, extracellular binding and reduction of copper, results in a corresponding oxidation of Cys-144 and Cys-158, and the formation of a disulfide bond. Trophic-factor deprivation triggers the cleavage of surface APP by beta-secretase to release sAPP-beta which is further cleaved to release an N-terminal fragment of APP (N-APP). Post-translationally, amyloid-beta peptides are degraded by IDE. In terms of processing, sulfated on tyrosine residues.

It localises to the cell membrane. The protein localises to the membrane. Its subcellular location is the perikaryon. The protein resides in the cell projection. It is found in the growth cone. It localises to the clathrin-coated pit. The protein localises to the early endosome. Its subcellular location is the cytoplasmic vesicle. The protein resides in the endoplasmic reticulum. It is found in the golgi apparatus. It localises to the secreted. The protein localises to the cell surface. Its subcellular location is the nucleus. The protein resides in the cytoplasm. Functionally, functions as a cell surface receptor and performs physiological functions on the surface of neurons relevant to neurite growth, neuronal adhesion and axonogenesis. Interaction between APP molecules on neighboring cells promotes synaptogenesis. Involved in cell mobility and transcription regulation through protein-protein interactions. Can promote transcription activation through binding to APBB1-KAT5 and inhibit Notch signaling through interaction with Numb. Couples to apoptosis-inducing pathways such as those mediated by G(o) and JIP. Inhibits G(o)-alpha ATPase activity. Acts as a kinesin I membrane receptor, mediating the axonal transport of beta-secretase and presenilin 1. By acting as a kinesin I membrane receptor, plays a role in axonal anterograde transport of cargo towards synapses in axons. May be involved in copper homeostasis/oxidative stress through copper ion reduction. In vitro, copper-metallated APP induces neuronal death directly or is potentiated through Cu(2+)-mediated low-density lipoprotein oxidation. Can regulate neurite outgrowth through binding to components of the extracellular matrix such as heparin and collagen I and IV. Induces a AGER-dependent pathway that involves activation of p38 MAPK, resulting in internalization of amyloid-beta peptide and mitochondrial dysfunction in cultured cortical neurons. Provides Cu(2+) ions for GPC1 which are required for release of nitric oxide (NO) and subsequent degradation of the heparan sulfate chains on GPC1. Its function is as follows. Amyloid-beta peptides are lipophilic metal chelators with metal-reducing activity. Binds transient metals such as copper, zinc and iron. In terms of biological role, the gamma-CTF peptides as well as the caspase-cleaved peptides, including C31, are potent enhancers of neuronal apoptosis. The sequence is that of Amyloid-beta precursor protein from Sus scrofa (Pig).